Reading from the N-terminus, the 201-residue chain is Peptide deformylase (201 aa).

A compositionally biased stretch (polar residues) spans 1 to 17 (MANNFSQLARKSKTNSP). A disordered region spans residues 1–24 (MANNFSQLARKSKTNSPIEKVSKE). Fe cation-binding residues include Cys-121 and His-163. Glu-164 is an active-site residue. Fe cation is bound at residue His-167.

It belongs to the polypeptide deformylase family. It depends on Fe(2+) as a cofactor.

The enzyme catalyses N-terminal N-formyl-L-methionyl-[peptide] + H2O = N-terminal L-methionyl-[peptide] + formate. Its function is as follows. Removes the formyl group from the N-terminal Met of newly synthesized proteins. Requires at least a dipeptide for an efficient rate of reaction. N-terminal L-methionine is a prerequisite for activity but the enzyme has broad specificity at other positions. This Prochlorococcus marinus subsp. pastoris (strain CCMP1986 / NIES-2087 / MED4) protein is Peptide deformylase.